Reading from the N-terminus, the 560-residue chain is Arginine--tRNA ligase (560 aa).

Residues 122-132 (ANPNGPLHIGH) carry the 'HIGH' region motif.

Belongs to the class-I aminoacyl-tRNA synthetase family.

It localises to the cytoplasm. It carries out the reaction tRNA(Arg) + L-arginine + ATP = L-arginyl-tRNA(Arg) + AMP + diphosphate. The chain is Arginine--tRNA ligase (argS) from Methanothermobacter thermautotrophicus (strain ATCC 29096 / DSM 1053 / JCM 10044 / NBRC 100330 / Delta H) (Methanobacterium thermoautotrophicum).